A 79-amino-acid chain; its full sequence is Small ribosomal subunit protein bS18c (79 aa).

The protein belongs to the bacterial ribosomal protein bS18 family. As to quaternary structure, part of the 30S ribosomal subunit.

Its subcellular location is the plastid. The protein resides in the chloroplast. The polypeptide is Small ribosomal subunit protein bS18c (Physcomitrium patens (Spreading-leaved earth moss)).